Reading from the N-terminus, the 443-residue chain is Phosphoglucosamine mutase (443 aa).

The Phosphoserine intermediate role is filled by Ser102. Ser102, Asp241, Asp243, and Asp245 together coordinate Mg(2+). Ser102 bears the Phosphoserine mark.

It belongs to the phosphohexose mutase family. Requires Mg(2+) as cofactor. Activated by phosphorylation.

It carries out the reaction alpha-D-glucosamine 1-phosphate = D-glucosamine 6-phosphate. Functionally, catalyzes the conversion of glucosamine-6-phosphate to glucosamine-1-phosphate. The polypeptide is Phosphoglucosamine mutase (Polaromonas sp. (strain JS666 / ATCC BAA-500)).